The chain runs to 415 residues: Corticotropin-releasing factor receptor 1 (415 aa).

Positions 1–23 are cleaved as a signal peptide; that stretch reads MGRRPQLRLVKALLLLGLNPVST. Residues 24 to 111 are Extracellular-facing; that stretch reads SLQDQRCENL…CQEILNEEKK (88 aa). Cystine bridges form between Cys-30–Cys-54, Cys-44–Cys-87, and Cys-68–Cys-102. Residues Asn-38, Asn-45, Asn-78, Asn-90, and Asn-98 are each glycosylated (N-linked (GlcNAc...) asparagine). The important for peptide agonist binding stretch occupies residues 99–108; the sequence is YSECQEILNE. The chain crosses the membrane as a helical span at residues 112-142; it reads SKVHYHVAVIINYLGHCISLVALLVAFVLFL. Residues 143 to 149 lie on the Cytoplasmic side of the membrane; that stretch reads RLRSIRC. A helical transmembrane segment spans residues 150 to 174; the sequence is LRNIIHWNLISAFILRNATWFVVQL. The Extracellular portion of the chain corresponds to 175–189; it reads TVSPEVHQSNVAWCR. An intrachain disulfide couples Cys-188 to Cys-258. Residues 190–218 traverse the membrane as a helical segment; that stretch reads LVTAAYNYFHVTNFFWMFGEGCYLHTAIV. Topologically, residues 219-225 are cytoplasmic; it reads LTYSTDR. The helical transmembrane segment at 226-253 threads the bilayer; it reads LRKWMFVCIGWGVPFPIIVAWAIGKLHY. Residues 254–269 lie on the Extracellular side of the membrane; that stretch reads DNEKCWFGKRPGVYTD. Residues 270–295 form a helical membrane-spanning segment; it reads YIYQGPMILVLLINFIFLFNIVRILM. The segment at 280-290 is important for antagonist binding; that stretch reads LLINFIFLFNI. The Cytoplasmic segment spans residues 296–306; it reads TKLRASTTSET. Residue Ser-301 is modified to Phosphoserine; by PKA. The chain crosses the membrane as a helical span at residues 307–331; the sequence is IQYRKAVKATLVLLPLLGITYMLFF. Over 332–338 the chain is Extracellular; sequence VNPGEDE. The chain crosses the membrane as a helical span at residues 339 to 368; it reads VSRVVFIYFNSFLESFQGFFVSVFYCFLNS. Topologically, residues 369 to 415 are cytoplasmic; the sequence is EVRSAIRKRWRRWQDKHSIRARVARAMSIPTSPTRVSFHSIKQSTAV.

The protein belongs to the G-protein coupled receptor 2 family. As to quaternary structure, interacts (via N-terminal extracellular domain) with CRH and UCN. Interacts with DLG1; this inhibits endocytosis of CRHR1 after agonist binding. Heterodimer; heterodimerizes with GPER1. In terms of processing, C-terminal Ser or Thr residues may be phosphorylated. Phosphorylation at Ser-301 by PKA prevents maximal coupling to Gq-protein, and thereby negatively regulates downstream signaling. Detected in brain, especially in cerebellum. Detected in pituitary gland, and at lower levels in the olfactory bulb.

It localises to the cell membrane. It is found in the endosome. In terms of biological role, G-protein coupled receptor for CRH (corticotropin-releasing factor) and UCN (urocortin). Has high affinity for CRH and UCN. Ligand binding causes a conformation change that triggers signaling via guanine nucleotide-binding proteins (G proteins) and down-stream effectors, such as adenylate cyclase. Promotes the activation of adenylate cyclase, leading to increased intracellular cAMP levels. Inhibits the activity of the calcium channel CACNA1H. Required for normal embryonic development of the adrenal gland and for normal hormonal responses to stress. Plays a role in the response to anxiogenic stimuli. This chain is Corticotropin-releasing factor receptor 1 (Crhr1), found in Rattus norvegicus (Rat).